The primary structure comprises 375 residues: UDP-N-acetylglucosamine--N-acetylmuramyl-(pentapeptide) pyrophosphoryl-undecaprenol N-acetylglucosamine transferase (375 aa).

UDP-N-acetyl-alpha-D-glucosamine is bound by residues 13–15 (TGG), Asn124, Arg165, Ser193, and Gln294.

It belongs to the glycosyltransferase 28 family. MurG subfamily.

It localises to the cell inner membrane. It carries out the reaction di-trans,octa-cis-undecaprenyl diphospho-N-acetyl-alpha-D-muramoyl-L-alanyl-D-glutamyl-meso-2,6-diaminopimeloyl-D-alanyl-D-alanine + UDP-N-acetyl-alpha-D-glucosamine = di-trans,octa-cis-undecaprenyl diphospho-[N-acetyl-alpha-D-glucosaminyl-(1-&gt;4)]-N-acetyl-alpha-D-muramoyl-L-alanyl-D-glutamyl-meso-2,6-diaminopimeloyl-D-alanyl-D-alanine + UDP + H(+). It participates in cell wall biogenesis; peptidoglycan biosynthesis. Cell wall formation. Catalyzes the transfer of a GlcNAc subunit on undecaprenyl-pyrophosphoryl-MurNAc-pentapeptide (lipid intermediate I) to form undecaprenyl-pyrophosphoryl-MurNAc-(pentapeptide)GlcNAc (lipid intermediate II). This is UDP-N-acetylglucosamine--N-acetylmuramyl-(pentapeptide) pyrophosphoryl-undecaprenol N-acetylglucosamine transferase from Mesorhizobium japonicum (strain LMG 29417 / CECT 9101 / MAFF 303099) (Mesorhizobium loti (strain MAFF 303099)).